We begin with the raw amino-acid sequence, 163 residues long: NADH-quinone oxidoreductase subunit I (163 aa).

2 4Fe-4S ferredoxin-type domains span residues 54–84 (LRRY…IESD) and 94–123 (TRYD…ETPI). Cysteine 64, cysteine 67, cysteine 70, cysteine 74, cysteine 103, cysteine 106, cysteine 109, and cysteine 113 together coordinate [4Fe-4S] cluster.

It belongs to the complex I 23 kDa subunit family. NDH-1 is composed of 14 different subunits. Subunits NuoA, H, J, K, L, M, N constitute the membrane sector of the complex. It depends on [4Fe-4S] cluster as a cofactor.

It is found in the cell inner membrane. It carries out the reaction a quinone + NADH + 5 H(+)(in) = a quinol + NAD(+) + 4 H(+)(out). In terms of biological role, NDH-1 shuttles electrons from NADH, via FMN and iron-sulfur (Fe-S) centers, to quinones in the respiratory chain. The immediate electron acceptor for the enzyme in this species is believed to be ubiquinone. Couples the redox reaction to proton translocation (for every two electrons transferred, four hydrogen ions are translocated across the cytoplasmic membrane), and thus conserves the redox energy in a proton gradient. The protein is NADH-quinone oxidoreductase subunit I of Cupriavidus pinatubonensis (strain JMP 134 / LMG 1197) (Cupriavidus necator (strain JMP 134)).